The chain runs to 110 residues: MFEKTNRMNLLFDFYQELLTTKQKSYVSFYYLDDYSLGEIAEEFEVSRQAIYDNIKRTEESLEKYEEKLGMLRKYQQREKLFDQLEAQLTKKNFLDEQVKDTLEQLKNID.

Belongs to the UPF0122 family.

In terms of biological role, might take part in the signal recognition particle (SRP) pathway. This is inferred from the conservation of its genetic proximity to ftsY/ffh. May be a regulatory protein. The polypeptide is UPF0122 protein lin1916 (Listeria innocua serovar 6a (strain ATCC BAA-680 / CLIP 11262)).